The chain runs to 448 residues: Protein odr-4 homolog (448 aa).

Helical transmembrane passes span 76–96 (ASQL…FLMT) and 428–448 (GLLI…YYII).

The protein belongs to the ODR-4 family.

The protein localises to the membrane. In terms of biological role, may play a role in the trafficking of a subset of G-protein coupled receptors. The sequence is that of Protein odr-4 homolog (odr4) from Xenopus tropicalis (Western clawed frog).